The primary structure comprises 195 residues: Holliday junction branch migration complex subunit RuvA (195 aa).

The tract at residues 1-64 is domain I; it reads MIKGVEGEIT…DRAPEIYGFK (64 aa). A domain II region spans residues 65 to 137; the sequence is DRAEYNVFLM…LYDLVKDYAV (73 aa). Positions 137–141 are flexible linker; that stretch reads VEFPK. The tract at residues 142-195 is domain III; the sequence is ELSDVSEDAVGALTALGFDMTSAKLAVNEVLKEQTVENTQELVRKALRKLNKTR.

It belongs to the RuvA family. As to quaternary structure, homotetramer. Forms an RuvA(8)-RuvB(12)-Holliday junction (HJ) complex. HJ DNA is sandwiched between 2 RuvA tetramers; dsDNA enters through RuvA and exits via RuvB. An RuvB hexamer assembles on each DNA strand where it exits the tetramer. Each RuvB hexamer is contacted by two RuvA subunits (via domain III) on 2 adjacent RuvB subunits; this complex drives branch migration. In the full resolvosome a probable DNA-RuvA(4)-RuvB(12)-RuvC(2) complex forms which resolves the HJ.

Its subcellular location is the cytoplasm. Functionally, the RuvA-RuvB-RuvC complex processes Holliday junction (HJ) DNA during genetic recombination and DNA repair, while the RuvA-RuvB complex plays an important role in the rescue of blocked DNA replication forks via replication fork reversal (RFR). RuvA specifically binds to HJ cruciform DNA, conferring on it an open structure. The RuvB hexamer acts as an ATP-dependent pump, pulling dsDNA into and through the RuvAB complex. HJ branch migration allows RuvC to scan DNA until it finds its consensus sequence, where it cleaves and resolves the cruciform DNA. The protein is Holliday junction branch migration complex subunit RuvA of Kosmotoga olearia (strain ATCC BAA-1733 / DSM 21960 / TBF 19.5.1).